Here is a 483-residue protein sequence, read N- to C-terminus: MGSTGRDAEVTRGDFPDGFVFGVATSAYQIEGARREGGKGDNIWDVFTENKERILDGSSGEVAVDHYHRYKEDIELMASLGFRAYRFSISWPRIFPDGLGKNVNEQGVAFYNDLINFMIEKGIEPYATLYHWDLPHNLQQTVGGWLSDKIVEYFALYAEACFANFGDRVKHWITINEPLQTAVNGYGIGHFAPGGCEGETARCYLAAHYQILAHAAAVDVYRRKFKAVQGGEVGLVVDCEWAEPFSEKTEDQVAAERRLDFQLGWYLDPIYFGDYPESMRQRLGDDLPTFSEKDKEFIRNKIDFVGINHYTSRFIAHHQDPEDIYFYRVQQVERIEKWNTGEKIGERAASEWLFIVPWGLRKLLNYAAKRYGNPVIYVTENGMDEEDDQSATLDQVLNDTTRVGYFKGYLASVAQAIKDGADVRGYFAWSFLDNFEWAMGYTKRFGIVYVDYKNGLSRHPKASARWFSRFLKGDDAENKADMN.

Residues glutamine 29, histidine 131, 176–177, tyrosine 310, and glutamate 380 contribute to the a beta-D-glucoside site; that span reads NE. The active-site Proton donor is glutamate 177. Glutamate 380 (nucleophile) is an active-site residue. Asparagine 398 carries N-linked (GlcNAc...) asparagine glycosylation. A beta-D-glucoside is bound by residues tryptophan 429, 436-437, and phenylalanine 445; that span reads EW.

Belongs to the glycosyl hydrolase 1 family.

The catalysed reaction is Hydrolysis of terminal, non-reducing beta-D-glucosyl residues with release of beta-D-glucose.. The polypeptide is Beta-glucosidase 4 (BGLU4) (Oryza sativa subsp. japonica (Rice)).